Consider the following 476-residue polypeptide: Bifunctional protein HldE (476 aa).

The interval 1 to 318 (MKPVLPDYSK…AEAVHGSKDT (318 aa)) is ribokinase. 195–198 (NMSE) contributes to the ATP binding site. The active site involves aspartate 264. Positions 344-476 (MTNGCFDILH…IIEAIKGGRG (133 aa)) are cytidylyltransferase.

In the N-terminal section; belongs to the carbohydrate kinase PfkB family. It in the C-terminal section; belongs to the cytidylyltransferase family. In terms of assembly, homodimer.

The enzyme catalyses D-glycero-beta-D-manno-heptose 7-phosphate + ATP = D-glycero-beta-D-manno-heptose 1,7-bisphosphate + ADP + H(+). It catalyses the reaction D-glycero-beta-D-manno-heptose 1-phosphate + ATP + H(+) = ADP-D-glycero-beta-D-manno-heptose + diphosphate. It participates in nucleotide-sugar biosynthesis; ADP-L-glycero-beta-D-manno-heptose biosynthesis; ADP-L-glycero-beta-D-manno-heptose from D-glycero-beta-D-manno-heptose 7-phosphate: step 1/4. It functions in the pathway nucleotide-sugar biosynthesis; ADP-L-glycero-beta-D-manno-heptose biosynthesis; ADP-L-glycero-beta-D-manno-heptose from D-glycero-beta-D-manno-heptose 7-phosphate: step 3/4. Functionally, catalyzes the phosphorylation of D-glycero-D-manno-heptose 7-phosphate at the C-1 position to selectively form D-glycero-beta-D-manno-heptose-1,7-bisphosphate. In terms of biological role, catalyzes the ADP transfer from ATP to D-glycero-beta-D-manno-heptose 1-phosphate, yielding ADP-D-glycero-beta-D-manno-heptose. In Vibrio cholerae serotype O1 (strain M66-2), this protein is Bifunctional protein HldE.